The chain runs to 84 residues: Small ribosomal subunit protein uS17 (84 aa).

Belongs to the universal ribosomal protein uS17 family. In terms of assembly, part of the 30S ribosomal subunit.

One of the primary rRNA binding proteins, it binds specifically to the 5'-end of 16S ribosomal RNA. This is Small ribosomal subunit protein uS17 from Borrelia duttonii (strain Ly).